The primary structure comprises 256 residues: Alcohol dehydrogenase (256 aa).

12 to 35 lines the NAD(+) pocket; the sequence is FVAGLGGIGLDTSKELLKRDLKNL. S140 contributes to the substrate binding site. Y153 functions as the Proton acceptor in the catalytic mechanism.

Belongs to the short-chain dehydrogenases/reductases (SDR) family. As to quaternary structure, homodimer.

It catalyses the reaction a primary alcohol + NAD(+) = an aldehyde + NADH + H(+). The catalysed reaction is a secondary alcohol + NAD(+) = a ketone + NADH + H(+). The protein is Alcohol dehydrogenase (Adh) of Drosophila sechellia (Fruit fly).